The chain runs to 122 residues: Ribosomal protein eL22-like 1 (122 aa).

3 positions are modified to phosphoserine: S112, S118, and S120.

This sequence belongs to the eukaryotic ribosomal protein eL22 family.

This is Ribosomal protein eL22-like 1 (Rpl22l1) from Mus musculus (Mouse).